The following is a 419-amino-acid chain: G protein-activated inward rectifier potassium channel 4 (419 aa).

The disordered stretch occupies residues 1–24 (MAGDSRNAMNQDMEIGVTPRDPKK). Topologically, residues 1 to 86 (MAGDSRNAMN…LFTTLVDLKW (86 aa)) are cytoplasmic. Ser-5 bears the Phosphoserine mark. Residues 87–111 (RFNLLVFTMVYTITWLFFGFIWWLI) form a helical membrane-spanning segment. Over 112–135 (AYIRGDLDHVGDREWIPCVENLSG) the chain is Extracellular. The segment at residues 136-147 (FVSAFLFSIETE) is an intramembrane region (helical; Pore-forming). The segment at residues 148–154 (TTIGYGF) is an intramembrane region (pore-forming). The Selectivity filter motif lies at 149-154 (TIGYGF). At 155-163 (RVITEKCPE) the chain is on the extracellular side. A helical transmembrane segment spans residues 164–185 (GIVLLLVQAILGSIVNAFMVGC). Topologically, residues 186–419 (MFVKISQPKK…SGSQETKDSA (234 aa)) are cytoplasmic. The segment at 381 to 419 (PSPPLPGGCVGAELGAEAEQEGEEEPEGLSGSQETKDSA) is disordered. The span at 396 to 407 (AEAEQEGEEEPE) shows a compositional bias: acidic residues.

The protein belongs to the inward rectifier-type potassium channel (TC 1.A.2.1) family. KCNJ5 subfamily. Associates with KCNJ3/GIRK1 or KCNJ6/GIRK2 to form a G-protein-activated heteromultimer pore-forming unit. The resulting inward current is much larger.

Its subcellular location is the membrane. The catalysed reaction is K(+)(in) = K(+)(out). Its activity is regulated as follows. Heteromultimer composed of KCNJ3/GIRK1 and KCNJ5/GIRK4 is activated by phosphatidylinositol 4,5 biphosphate (PtdIns(4,5)P2). Its function is as follows. Inward rectifier potassium channels are characterized by a greater tendency to allow potassium to flow into the cell rather than out of it. Their voltage dependence is regulated by the concentration of extracellular potassium; as external potassium is raised, the voltage range of the channel opening shifts to more positive voltages. The inward rectification is mainly due to the blockage of outward current by internal magnesium. This receptor plays a crucial role in regulating the heartbeat. Can be blocked by external barium. This potassium channel is controlled by G proteins. This is G protein-activated inward rectifier potassium channel 4 (KCNJ5) from Bos taurus (Bovine).